The primary structure comprises 313 residues: Olfactory receptor 4M2 (313 aa).

At 1–25 the chain is on the extracellular side; it reads METANYTKVTEFVLTGLSQTPEVQL. Asparagine 5 is a glycosylation site (N-linked (GlcNAc...) asparagine). A helical membrane pass occupies residues 26-49; it reads VLFVIFLSFYLFILPGNILIICTI. Over 50–57 the chain is Cytoplasmic; that stretch reads SLDPHLTS. The helical transmembrane segment at 58–79 threads the bilayer; it reads PMYFLLANLAFLDIWYSSITAP. The Extracellular segment spans residues 80–100; it reads EMLIDFFVERKIISFDGCIAQ. Cysteine 97 and cysteine 189 form a disulfide bridge. A helical transmembrane segment spans residues 101–120; sequence LFFLHFAGASEMFLLTVMAF. Residues 121-139 are Cytoplasmic-facing; that stretch reads DLYTAICRPLHYATIMNQR. Residues 140 to 158 traverse the membrane as a helical segment; it reads LCCILVALSWRGGFIHSII. The Extracellular portion of the chain corresponds to 159–195; the sequence is QVALIVRLPFCGPNELDSYFCDITQVVRIACANTFPE. Residues 196-219 form a helical membrane-spanning segment; it reads ELVMICSSGLISVVCLIALLMSYA. The Cytoplasmic portion of the chain corresponds to 220 to 237; the sequence is FLLALFKKLSGSGENTNR. The chain crosses the membrane as a helical span at residues 238–260; that stretch reads AMSTCYSHITIVVLMFGPSIYIY. The Extracellular portion of the chain corresponds to 261-271; sequence ARPFDSFSLDK. A helical transmembrane segment spans residues 272–291; sequence VVSVFNTLIFPLRNPIIYTL. The Cytoplasmic portion of the chain corresponds to 292 to 313; it reads RNKEVKAAMRKLVTKYILCKEK.

The protein belongs to the G-protein coupled receptor 1 family.

It is found in the cell membrane. Odorant receptor. In Homo sapiens (Human), this protein is Olfactory receptor 4M2 (OR4M2).